A 482-amino-acid polypeptide reads, in one-letter code: Nodulation protein T (482 aa).

An N-terminal signal peptide occupies residues 1–17 (MHSFRLAAAVLPLLLSS). Cysteine 18 carries N-palmitoyl cysteine lipidation. The S-diacylglycerol cysteine moiety is linked to residue cysteine 18.

Belongs to the outer membrane factor (OMF) (TC 1.B.17) family.

The protein localises to the cell membrane. This Rhizobium leguminosarum bv. viciae protein is Nodulation protein T (nodT).